The sequence spans 285 residues: Probable endonuclease 4 (285 aa).

Zn(2+)-binding residues include His-69, His-109, Glu-145, Asp-179, His-182, His-216, Asp-229, His-231, and Glu-261.

It belongs to the AP endonuclease 2 family. Requires Zn(2+) as cofactor.

The enzyme catalyses Endonucleolytic cleavage to 5'-phosphooligonucleotide end-products.. Functionally, endonuclease IV plays a role in DNA repair. It cleaves phosphodiester bonds at apurinic or apyrimidinic (AP) sites, generating a 3'-hydroxyl group and a 5'-terminal sugar phosphate. The chain is Probable endonuclease 4 from Escherichia fergusonii (strain ATCC 35469 / DSM 13698 / CCUG 18766 / IAM 14443 / JCM 21226 / LMG 7866 / NBRC 102419 / NCTC 12128 / CDC 0568-73).